The following is a 98-amino-acid chain: NADH-ubiquinone oxidoreductase chain 4L (98 aa).

A run of 3 helical transmembrane segments spans residues Met1–Ile21, Ser29–Leu49, and Ile61–Val81.

This sequence belongs to the complex I subunit 4L family. As to quaternary structure, core subunit of respiratory chain NADH dehydrogenase (Complex I) which is composed of 45 different subunits.

It is found in the mitochondrion inner membrane. It carries out the reaction a ubiquinone + NADH + 5 H(+)(in) = a ubiquinol + NAD(+) + 4 H(+)(out). Its function is as follows. Core subunit of the mitochondrial membrane respiratory chain NADH dehydrogenase (Complex I) which catalyzes electron transfer from NADH through the respiratory chain, using ubiquinone as an electron acceptor. Part of the enzyme membrane arm which is embedded in the lipid bilayer and involved in proton translocation. The chain is NADH-ubiquinone oxidoreductase chain 4L (MT-ND4L) from Ursus americanus (American black bear).